The sequence spans 1489 residues: Calmodulin-regulated spectrin-associated protein 2 (1489 aa).

The region spanning 222 to 335 is the Calponin-homology (CH) domain; sequence WKLVPARYRK…FMAELFWWFE (114 aa). The segment at 375-415 is disordered; that stretch reads SSDFPSSGEGATFTQSHHHLPSRYSRPQAHSSASGGIRRSS. Over residues 405 to 415 the composition is skewed to low complexity; it reads SSASGGIRRSS. Phosphoserine occurs at positions 416 and 418. Residue Thr-426 is modified to Phosphothreonine. Phosphoserine is present on residues Ser-464, Ser-598, Ser-599, Ser-611, and Ser-673. 2 disordered regions span residues 611-639 and 668-730; these read SPIT…EDSS and TREA…GSEL. Residues 668 to 679 show a composition bias toward polar residues; it reads TREALSPCPSTV. Residue Thr-678 is modified to Phosphothreonine. A Phosphoserine modification is found at Ser-680. The span at 680–699 shows a compositional bias: low complexity; it reads STKSQPGSSASSSSGVKMTS. Residues 703 to 713 are compositionally biased toward basic and acidic residues; that stretch reads QKFRKLNHTDG. Residues 756-793 adopt a coiled-coil conformation; that stretch reads LLASEMVHLRMKLEEKRRAIEAQKKKMEAAFTKQRQKM. The tract at residues 812–844 is disordered; that stretch reads LREEAAGAEDEKVYTDRAKEKESQKTDGQRSKS. Ser-862 is modified (phosphoserine). Residues 887 to 926 are a coiled coil; that stretch reads EILEYTKSIEKLNSSLHFLQQEMQRLSLQQEMLMQMREQQ. Positions 922–1034 are MBD region; it reads MREQQSWVIS…IQTRSFVCFG (113 aa). The disordered stretch occupies residues 925-1017; that stretch reads QQSWVISPPQ…SVDSLPRLRR (93 aa). Phosphoserine occurs at positions 931 and 936. The span at 960–989 shows a compositional bias: polar residues; the sequence is SSDSPRPTHPSPQSSNRKSASFSVKSQRTP. Phosphothreonine is present on residues Thr-997, Thr-1002, and Thr-1004. Residues Ser-1008 and Ser-1019 each carry the phosphoserine modification. Disordered regions lie at residues 1032–1078, 1096–1152, and 1191–1349; these read CFGD…PFES, PNED…DKEQ, and KETQ…EYTG. Over residues 1039–1075 the composition is skewed to basic and acidic residues; sequence PQLKESKPKEEVKKEELESKGTLEQRGHNPEEKEIKP. Positions 1105–1117 are enriched in pro residues; it reads TEPPPKPVFPPTA. Basic and acidic residues-rich tracts occupy residues 1132 to 1152 and 1191 to 1252; these read KPPE…DKEQ and KETQ…DTVI. Phosphoserine is present on Ser-1148. Positions 1166-1238 form a coiled coil; it reads KDDQKAENDM…REFIRQEYMR (73 aa). Polar residues predominate over residues 1287–1299; it reads SSLSLASLNTGDN. Residues Ser-1313, Ser-1319, and Ser-1321 each carry the phosphoserine modification. Positions 1334–1346 are enriched in polar residues; sequence NASTTSSVASGTE. The region spanning 1349-1483 is the CKK domain; that stretch reads GPKLYKEPSA…QTKRPVTPKK (135 aa).

Belongs to the CAMSAP1 family. In terms of assembly, interacts with CAMSAP3. Interacts with KATNA1 and KATNB1; leading to regulate the length of CAMSAP2-decorated microtubule stretches. Interacts with a complex formed by AKAP9 and PDE4DIP isoform 13/MMG8/SMYLE, which recruits CAMSAP2 to the Golgi. Interacts with MAPRE1/EB1.

Its subcellular location is the cytoplasm. It is found in the cytoskeleton. The protein localises to the golgi apparatus. The protein resides in the cilium basal body. In terms of biological role, key microtubule-organizing protein that specifically binds the minus-end of non-centrosomal microtubules and regulates their dynamics and organization. Specifically recognizes growing microtubule minus-ends and autonomously decorates and stabilizes microtubule lattice formed by microtubule minus-end polymerization. Acts on free microtubule minus-ends that are not capped by microtubule-nucleating proteins or other factors and protects microtubule minus-ends from depolymerization. In addition, it also reduces the velocity of microtubule polymerization. Through the microtubule cytoskeleton, also regulates the organization of cellular organelles including the Golgi and the early endosomes. Essential for the tethering, but not for nucleation of non-centrosomal microtubules at the Golgi: together with Golgi-associated proteins AKAP9 and PDE4DIP, required to tether non-centrosomal minus-end microtubules to the Golgi, an important step for polarized cell movement. Also acts as a regulator of neuronal polarity and development: localizes to non-centrosomal microtubule minus-ends in neurons and stabilizes non-centrosomal microtubules, which is required for neuronal polarity, axon specification and dendritic branch formation. Through the microtubule cytoskeleton, regulates the autophagosome transport. The sequence is that of Calmodulin-regulated spectrin-associated protein 2 from Homo sapiens (Human).